Consider the following 62-residue polypeptide: UPF0337 protein XCC0070 (62 aa).

Residues 32–62 (LEGAAEKNIGKVQRKAGELADDVRDATKSTR) are disordered.

It belongs to the UPF0337 (CsbD) family.

This is UPF0337 protein XCC0070 from Xanthomonas campestris pv. campestris (strain ATCC 33913 / DSM 3586 / NCPPB 528 / LMG 568 / P 25).